The following is a 303-amino-acid chain: Carboxypeptidase B (303 aa).

The Peptidase M14 domain occupies 5-298; sequence SYHDYDEINA…EGVKVVANFV (294 aa). Zn(2+) is bound by residues histidine 63 and glutamate 66. Substrate is bound by residues 63-66, arginine 118, and 136-137; these read HARE and NR. Histidine 189 provides a ligand contact to Zn(2+). Substrate-binding positions include 190–191 and tyrosine 241; that span reads SY. Glutamate 264 (proton donor/acceptor) is an active-site residue.

Belongs to the peptidase M14 family. Zn(2+) is required as a cofactor.

It is found in the secreted. It catalyses the reaction Preferential release of a C-terminal lysine or arginine amino acid.. This chain is Carboxypeptidase B, found in Astacus astacus (Noble crayfish).